The following is a 257-amino-acid chain: 4-hydroxy-tetrahydrodipicolinate reductase (257 aa).

NAD(+) contacts are provided by residues 11-16 (GANGRM) and Glu37. Position 38 (Arg38) interacts with NADP(+). NAD(+) contacts are provided by residues 86–88 (GST) and 110–113 (SGNY). His144 (proton donor/acceptor) is an active-site residue. Residue His145 coordinates (S)-2,3,4,5-tetrahydrodipicolinate. Lys148 serves as the catalytic Proton donor. 154–155 (GT) provides a ligand contact to (S)-2,3,4,5-tetrahydrodipicolinate.

Belongs to the DapB family.

It localises to the cytoplasm. It catalyses the reaction (S)-2,3,4,5-tetrahydrodipicolinate + NAD(+) + H2O = (2S,4S)-4-hydroxy-2,3,4,5-tetrahydrodipicolinate + NADH + H(+). The catalysed reaction is (S)-2,3,4,5-tetrahydrodipicolinate + NADP(+) + H2O = (2S,4S)-4-hydroxy-2,3,4,5-tetrahydrodipicolinate + NADPH + H(+). Its pathway is amino-acid biosynthesis; L-lysine biosynthesis via DAP pathway; (S)-tetrahydrodipicolinate from L-aspartate: step 4/4. Its function is as follows. Catalyzes the conversion of 4-hydroxy-tetrahydrodipicolinate (HTPA) to tetrahydrodipicolinate. This is 4-hydroxy-tetrahydrodipicolinate reductase from Caulobacter vibrioides (strain ATCC 19089 / CIP 103742 / CB 15) (Caulobacter crescentus).